We begin with the raw amino-acid sequence, 396 residues long: ATP synthase subunit beta, chloroplastic (396 aa).

Residue 74 to 81 (GGAGVGKT) coordinates ATP.

Belongs to the ATPase alpha/beta chains family. In terms of assembly, F-type ATPases have 2 components, CF(1) - the catalytic core - and CF(0) - the membrane proton channel. CF(1) has five subunits: alpha(3), beta(3), gamma(1), delta(1), epsilon(1). CF(0) has four main subunits: a(1), b(1), b'(1) and c(9-12).

Its subcellular location is the plastid. It localises to the chloroplast thylakoid membrane. It catalyses the reaction ATP + H2O + 4 H(+)(in) = ADP + phosphate + 5 H(+)(out). Functionally, produces ATP from ADP in the presence of a proton gradient across the membrane. The catalytic sites are hosted primarily by the beta subunits. This is ATP synthase subunit beta, chloroplastic from Adiantum raddianum (Maidenhair fern).